A 148-amino-acid chain; its full sequence is UPF0178 protein lpp0103 (148 aa).

The protein belongs to the UPF0178 family.

The protein is UPF0178 protein lpp0103 of Legionella pneumophila (strain Paris).